A 495-amino-acid polypeptide reads, in one-letter code: Cytoplasmic alpha-amylase (495 aa).

2 residues coordinate Ca(2+): N104 and D198. D235 functions as the Nucleophile in the catalytic mechanism. H239 contacts Ca(2+). The Proton donor role is filled by E265.

This sequence belongs to the glycosyl hydrolase 13 family. As to quaternary structure, monomer. Ca(2+) is required as a cofactor.

The protein resides in the cytoplasm. It carries out the reaction Endohydrolysis of (1-&gt;4)-alpha-D-glucosidic linkages in polysaccharides containing three or more (1-&gt;4)-alpha-linked D-glucose units.. The protein is Cytoplasmic alpha-amylase (amyA) of Escherichia coli (strain K12).